A 428-amino-acid polypeptide reads, in one-letter code: Light-independent protochlorophyllide reductase subunit N (428 aa).

Residues Cys29, Cys54, and Cys115 each contribute to the [4Fe-4S] cluster site.

Belongs to the BchN/ChlN family. As to quaternary structure, protochlorophyllide reductase is composed of three subunits; BchL, BchN and BchB. Forms a heterotetramer of two BchB and two BchN subunits. Requires [4Fe-4S] cluster as cofactor.

The enzyme catalyses chlorophyllide a + oxidized 2[4Fe-4S]-[ferredoxin] + 2 ADP + 2 phosphate = protochlorophyllide a + reduced 2[4Fe-4S]-[ferredoxin] + 2 ATP + 2 H2O. It participates in porphyrin-containing compound metabolism; bacteriochlorophyll biosynthesis (light-independent). Functionally, component of the dark-operative protochlorophyllide reductase (DPOR) that uses Mg-ATP and reduced ferredoxin to reduce ring D of protochlorophyllide (Pchlide) to form chlorophyllide a (Chlide). This reaction is light-independent. The NB-protein (BchN-BchB) is the catalytic component of the complex. This chain is Light-independent protochlorophyllide reductase subunit N, found in Cereibacter sphaeroides (strain ATCC 17025 / ATH 2.4.3) (Rhodobacter sphaeroides).